We begin with the raw amino-acid sequence, 529 residues long: Plexin domain-containing protein 2 (529 aa).

Residues 1 to 30 (MARFPKADLAAAGVMLLCHFFTDQFQFADG) form the signal peptide. The Extracellular portion of the chain corresponds to 31–454 (KPGDQILDWQ…AEKKGGTLHA (424 aa)). The segment at 80–104 (ASVGQDSPEPRSFTDLLLDDGQDNN) is disordered. N-linked (GlcNAc...) asparagine glycans are attached at residues asparagine 103 and asparagine 160. The region spanning 327 to 372 (TCLQFNRCGPCVSSQIGFNCSWCSKLQRCSSGFDRHRQDWVDSGCP) is the PSI domain. A helical membrane pass occupies residues 455 to 475 (GLIIGILILVLIVATAILVTV). Topologically, residues 476-529 (YMYHHPTSAASIFFIERRPSRWPAMKFRRGSGHPAYAEVEPVGEKEGFIVSEQC) are cytoplasmic. Serine 506 is modified (phosphoserine).

It belongs to the plexin family. Interacts with CTTN. In terms of tissue distribution, expressed in the endothelial cells of the stroma but not in the endothelial cells of normal colonic tissue.

It localises to the membrane. Functionally, may play a role in tumor angiogenesis. The chain is Plexin domain-containing protein 2 (PLXDC2) from Homo sapiens (Human).